The sequence spans 591 residues: 4-coumarate--CoA ligase-like 3 (591 aa).

S228, S229, G230, T231, S232, and K236 together coordinate ATP. Residue Y280 coordinates (E)-4-coumaroyl-AMP. Residue R301 coordinates CoA. Positions 303-375 are SBD1; sequence DAGDAVAAIG…QAFPHVDFIQ (73 aa). (E)-4-coumaroyl-AMP is bound by residues A353, Q375, G376, and T380. Residues Q375, G376, T380, D459, and R474 each coordinate ATP. The tract at residues 376-440 is SBD2; sequence GYGMTESTAV…LHGPGIMKGY (65 aa). (E)-4-coumaroyl-AMP is bound by residues K476 and K480. Positions 482 and 483 each coordinate CoA. An ATP-binding site is contributed by K565.

The protein belongs to the ATP-dependent AMP-binding enzyme family. The cofactor is Mg(2+).

The enzyme catalyses (E)-4-coumarate + ATP + CoA = (E)-4-coumaroyl-CoA + AMP + diphosphate. The catalysed reaction is (E)-4-coumarate + ATP + H(+) = (E)-4-coumaroyl-AMP + diphosphate. It carries out the reaction (E)-4-coumaroyl-AMP + CoA = (E)-4-coumaroyl-CoA + AMP + H(+). Carboxylate--CoA ligase that may use 4-coumarate as substrate. Follows a two-step reaction mechanism, wherein the carboxylate substrate first undergoes adenylation by ATP, followed by a thioesterification in the presence of CoA to yield the final CoA thioester. The chain is 4-coumarate--CoA ligase-like 3 (4CLL3) from Oryza sativa subsp. japonica (Rice).